Consider the following 240-residue polypeptide: Biosynthetic peptidoglycan transglycosylase (240 aa).

A helical transmembrane segment spans residues 27-47 (VVLLFFFAVFALLLIFRFVPI).

Belongs to the glycosyltransferase 51 family.

It is found in the cell inner membrane. The catalysed reaction is [GlcNAc-(1-&gt;4)-Mur2Ac(oyl-L-Ala-gamma-D-Glu-L-Lys-D-Ala-D-Ala)](n)-di-trans,octa-cis-undecaprenyl diphosphate + beta-D-GlcNAc-(1-&gt;4)-Mur2Ac(oyl-L-Ala-gamma-D-Glu-L-Lys-D-Ala-D-Ala)-di-trans,octa-cis-undecaprenyl diphosphate = [GlcNAc-(1-&gt;4)-Mur2Ac(oyl-L-Ala-gamma-D-Glu-L-Lys-D-Ala-D-Ala)](n+1)-di-trans,octa-cis-undecaprenyl diphosphate + di-trans,octa-cis-undecaprenyl diphosphate + H(+). It participates in cell wall biogenesis; peptidoglycan biosynthesis. In terms of biological role, peptidoglycan polymerase that catalyzes glycan chain elongation from lipid-linked precursors. The polypeptide is Biosynthetic peptidoglycan transglycosylase (Haemophilus influenzae (strain PittEE)).